The sequence spans 239 residues: Large ribosomal subunit protein uL1 (239 aa).

Belongs to the universal ribosomal protein uL1 family. In terms of assembly, part of the 50S ribosomal subunit.

Its function is as follows. Binds directly to 23S rRNA. The L1 stalk is quite mobile in the ribosome, and is involved in E site tRNA release. In terms of biological role, protein L1 is also a translational repressor protein, it controls the translation of the L11 operon by binding to its mRNA. The sequence is that of Large ribosomal subunit protein uL1 from Rickettsia canadensis (strain McKiel).